The primary structure comprises 353 residues: Cellulose-complementing protein (353 aa).

Disordered regions lie at residues 1-21 (MSAS…PQDF), 75-94 (PQIA…PAIV), and 117-337 (AVPA…SPRP). The span at 80 to 91 (APPPPPVVPDPP) shows a compositional bias: pro residues. Composition is skewed to low complexity over residues 117–132 (AVPA…VQAA) and 142–164 (IAEQ…VAAA). A compositionally biased stretch (pro residues) spans 165–175 (PVPPDPAPVTP). 2 stretches are compositionally biased toward polar residues: residues 196-226 (QVRT…SSIS) and 278-304 (STRS…QASR).

The protein is Cellulose-complementing protein (ccpAX) of Komagataeibacter xylinus (Gluconacetobacter xylinus).